A 332-amino-acid polypeptide reads, in one-letter code: Peroxidase C1C (332 aa).

The first 9 residues, 1-9, serve as a signal peptide directing secretion; it reads MLHASFSNA. At glutamine 10 the chain carries Pyrrolidone carboxylic acid. 4 disulfide bridges follow: cysteine 20-cysteine 100, cysteine 53-cysteine 58, cysteine 106-cysteine 310, and cysteine 186-cysteine 218. Asparagine 22 is a glycosylation site (N-linked (GlcNAc...) asparagine). Catalysis depends on histidine 51, which acts as the Proton acceptor. Positions 52, 55, 57, 59, and 61 each coordinate Ca(2+). Asparagine 66 carries N-linked (GlcNAc...) asparagine glycosylation. Residue proline 148 participates in substrate binding. A heme b-binding site is contributed by histidine 179. A Ca(2+)-binding site is contributed by threonine 180. N-linked (GlcNAc...) asparagine glycosylation is found at asparagine 195, asparagine 207, and asparagine 223. 3 residues coordinate Ca(2+): aspartate 231, threonine 234, and aspartate 239. Asparagine 264 is a glycosylation site (N-linked (GlcNAc...) asparagine).

Belongs to the peroxidase family. Classical plant (class III) peroxidase subfamily. Requires Ca(2+) as cofactor. It depends on heme b as a cofactor.

It is found in the secreted. The protein localises to the vacuole. It carries out the reaction 2 a phenolic donor + H2O2 = 2 a phenolic radical donor + 2 H2O. In terms of biological role, removal of H(2)O(2), oxidation of toxic reductants, biosynthesis and degradation of lignin, suberization, auxin catabolism, response to environmental stresses such as wounding, pathogen attack and oxidative stress. These functions might be dependent on each isozyme/isoform in each plant tissue. The polypeptide is Peroxidase C1C (PRXC1C) (Armoracia rusticana (Horseradish)).